The following is a 160-amino-acid chain: F-box protein At1g15015 (160 aa).

Residues 1–44 (MDVTLPHHVVEDILERLPVKTLRKFKCVCSTWRSTIDSQRFKDR) form the F-box domain.

This Arabidopsis thaliana (Mouse-ear cress) protein is F-box protein At1g15015.